Reading from the N-terminus, the 177-residue chain is ATP synthase subunit delta (177 aa).

It belongs to the ATPase delta chain family. In terms of assembly, F-type ATPases have 2 components, F(1) - the catalytic core - and F(0) - the membrane proton channel. F(1) has five subunits: alpha(3), beta(3), gamma(1), delta(1), epsilon(1). F(0) has three main subunits: a(1), b(2) and c(10-14). The alpha and beta chains form an alternating ring which encloses part of the gamma chain. F(1) is attached to F(0) by a central stalk formed by the gamma and epsilon chains, while a peripheral stalk is formed by the delta and b chains.

It is found in the cell membrane. F(1)F(0) ATP synthase produces ATP from ADP in the presence of a proton or sodium gradient. F-type ATPases consist of two structural domains, F(1) containing the extramembraneous catalytic core and F(0) containing the membrane proton channel, linked together by a central stalk and a peripheral stalk. During catalysis, ATP synthesis in the catalytic domain of F(1) is coupled via a rotary mechanism of the central stalk subunits to proton translocation. Its function is as follows. This protein is part of the stalk that links CF(0) to CF(1). It either transmits conformational changes from CF(0) to CF(1) or is implicated in proton conduction. In Caldanaerobacter subterraneus subsp. tengcongensis (strain DSM 15242 / JCM 11007 / NBRC 100824 / MB4) (Thermoanaerobacter tengcongensis), this protein is ATP synthase subunit delta.